Consider the following 277-residue polypeptide: MGIKTYKPKTSSLRYKTTLSFDDLSKGNDPLKSLTKGKKFKSGRDSSGRISIRRRGGGHKRKYRLIDFNRRDKFSIPARVASIEYDPNRSANIALLVYKDGEKRYIISPKDIKVGDVLESGPNAPIKIGNALPLENIPIGRTVHNIELNVGKGGQLVRSAGGYAMILASDGNYVTVKLSSGEVRLIFKKCIATIGEIGNEDYVNVSIGKAGKSRWLGRRPKVRGVAMNPVDHPHGGGEGKTSGGRHPVSPWGQPTKGYKTRKKKRYSDKFIIKRRNK.

Disordered stretches follow at residues 32–58 (KSLTKGKKFKSGRDSSGRISIRRRGGG) and 225–277 (VAMN…RRNK). Positions 258 to 277 (YKTRKKKRYSDKFIIKRRNK) are enriched in basic residues.

Belongs to the universal ribosomal protein uL2 family. In terms of assembly, part of the 50S ribosomal subunit. Forms a bridge to the 30S subunit in the 70S ribosome.

One of the primary rRNA binding proteins. Required for association of the 30S and 50S subunits to form the 70S ribosome, for tRNA binding and peptide bond formation. It has been suggested to have peptidyltransferase activity; this is somewhat controversial. Makes several contacts with the 16S rRNA in the 70S ribosome. In Borreliella afzelii (strain PKo) (Borrelia afzelii), this protein is Large ribosomal subunit protein uL2.